Here is a 158-residue protein sequence, read N- to C-terminus: uncharacterized protein (158 aa).

The helical transmembrane segment at 33–53 (VLAAVPQLGAAKVLVLLLLGV) threads the bilayer.

The protein localises to the membrane. This is an uncharacterized protein from Saccharomyces cerevisiae (strain ATCC 204508 / S288c) (Baker's yeast).